A 30-amino-acid polypeptide reads, in one-letter code: Beta-endorphin-2 (30 aa).

Y1 is subject to N-acetyltyrosine.

It belongs to the POMC family.

Its subcellular location is the secreted. This is Beta-endorphin-2 from Oncorhynchus keta (Chum salmon).